The primary structure comprises 436 residues: UPF0597 protein YhaM (436 aa).

Belongs to the UPF0597 family.

This is UPF0597 protein YhaM from Salmonella paratyphi B (strain ATCC BAA-1250 / SPB7).